The chain runs to 618 residues: Transport protein particle subunit trs85-2 (618 aa).

The protein belongs to the TRS85 family. In terms of assembly, part of the multisubunit TRAPP (transport protein particle) complexes I and II.

It localises to the golgi apparatus. The protein localises to the cis-Golgi network. Component of the TRAPP I and TRAPP II complexes. TRAPP I plays a key role in the late stages of endoplasmic reticulum to Golgi traffic. TRAPP II seems to play a role in intra-Golgi transport. Has a role late in meiosis following DNA replication. This chain is Transport protein particle subunit trs85-2 (trs85-2), found in Schizosaccharomyces pombe (strain 972 / ATCC 24843) (Fission yeast).